Reading from the N-terminus, the 238-residue chain is Calmodulin-binding protein 25 (238 aa).

Residues Ser-68–Gly-78 are compositionally biased toward polar residues. Residues Ser-68–Gly-87 are disordered. The Bipartite nuclear localization signal signature appears at Lys-92–Arg-108. Positions Phe-125–Gly-134 match the VQ motif. Residues Ser-201 to Ala-220 are disordered.

Interacts with calmodulin (CaM). Interacts with WRKY25 and WRKY51. Expressed in leaves, flowers and siliques.

Its subcellular location is the nucleus. Calmodulin-binding protein that functions as a negative regulator of osmotic stress tolerance. The protein is Calmodulin-binding protein 25 of Arabidopsis thaliana (Mouse-ear cress).